The primary structure comprises 316 residues: Retinol dehydrogenase 12 (316 aa).

46 to 52 lines the NADP(+) pocket; the sequence is GANTGIG. Residue S175 coordinates substrate. Y200 (proton acceptor) is an active-site residue.

Belongs to the short-chain dehydrogenases/reductases (SDR) family. Expressed in the retina.

The enzyme catalyses all-trans-retinol + NADP(+) = all-trans-retinal + NADPH + H(+). The catalysed reaction is 11-cis-retinol + NADP(+) = 11-cis-retinal + NADPH + H(+). It carries out the reaction 9-cis-retinol + NADP(+) = 9-cis-retinal + NADPH + H(+). It catalyses the reaction a 4-hydroxynonen-1-ol + NADP(+) = a 4-hydroxynonenal + NADPH + H(+). The enzyme catalyses (E)-non-2-en-1-ol + NADP(+) = (E)-non-2-enal + NADPH + H(+). The catalysed reaction is (Z)-non-6-en-1-ol + NADP(+) = (Z)-non-6-enal + NADPH + H(+). It carries out the reaction nonan-1-ol + NADP(+) = nonanal + NADPH + H(+). Its pathway is cofactor metabolism; retinol metabolism. Retinoids dehydrogenase/reductase with a clear preference for NADP. Displays high activity towards 9-cis, 11-cis and all-trans-retinal. Shows very weak activity towards 13-cis-retinol. Also exhibits activity, albeit with lower affinity than for retinaldehydes, towards lipid peroxidation products (C9 aldehydes) such as 4-hydroxynonenal and trans-2-nonenal. May play an important function in photoreceptor cells to detoxify 4-hydroxynonenal and potentially other toxic aldehyde products resulting from lipid peroxidation. Has no dehydrogenase activity towards steroids. The protein is Retinol dehydrogenase 12 (RDH12) of Bos taurus (Bovine).